Here is a 139-residue protein sequence, read N- to C-terminus: ATP synthase epsilon chain (139 aa).

The protein belongs to the ATPase epsilon chain family. As to quaternary structure, F-type ATPases have 2 components, CF(1) - the catalytic core - and CF(0) - the membrane proton channel. CF(1) has five subunits: alpha(3), beta(3), gamma(1), delta(1), epsilon(1). CF(0) has three main subunits: a, b and c.

The protein localises to the cell inner membrane. Functionally, produces ATP from ADP in the presence of a proton gradient across the membrane. This Pseudomonas putida (strain ATCC 700007 / DSM 6899 / JCM 31910 / BCRC 17059 / LMG 24140 / F1) protein is ATP synthase epsilon chain.